A 161-amino-acid chain; its full sequence is Allophycocyanin alpha-B chain (161 aa).

Position 71 is an N4-methylasparagine (Asn-71). Residue Cys-81 participates in (2R,3E)-phycocyanobilin binding.

Belongs to the phycobiliprotein family. Post-translationally, contains one covalently linked bilin chromophore.

Its subcellular location is the plastid. The protein localises to the chloroplast thylakoid membrane. Its function is as follows. Allophycocyanin is a photosynthetic bile pigment-protein complex with maximum absorption at approximately 650 nanometers. In Porphyra purpurea (Red seaweed), this protein is Allophycocyanin alpha-B chain (apcD).